We begin with the raw amino-acid sequence, 185 residues long: Ribosome-recycling factor (185 aa).

The interval 143–163 (RKDGEAGEDEVARAEKDLDKS) is disordered.

It belongs to the RRF family.

It is found in the cytoplasm. In terms of biological role, responsible for the release of ribosomes from messenger RNA at the termination of protein biosynthesis. May increase the efficiency of translation by recycling ribosomes from one round of translation to another. In Mycobacterium marinum (strain ATCC BAA-535 / M), this protein is Ribosome-recycling factor.